Here is a 279-residue protein sequence, read N- to C-terminus: uncharacterized protein (279 aa).

6 helical membrane passes run Pro29–Phe49, Val77–Leu97, Trp105–Thr125, Val147–Val167, Thr186–Phe206, and Pro240–Val260.

It belongs to the DcuC/DcuD transporter (TC 2.A.61) family.

It localises to the cell membrane. This is an uncharacterized protein from Haemophilus influenzae (strain ATCC 51907 / DSM 11121 / KW20 / Rd).